Here is a 1270-residue protein sequence, read N- to C-terminus: DNA-directed RNA polymerase subunit beta (1270 aa).

Belongs to the RNA polymerase beta chain family. As to quaternary structure, the RNAP catalytic core consists of 2 alpha, 1 beta, 1 beta' and 1 omega subunit. When a sigma factor is associated with the core the holoenzyme is formed, which can initiate transcription.

The catalysed reaction is RNA(n) + a ribonucleoside 5'-triphosphate = RNA(n+1) + diphosphate. DNA-dependent RNA polymerase catalyzes the transcription of DNA into RNA using the four ribonucleoside triphosphates as substrates. This chain is DNA-directed RNA polymerase subunit beta, found in Bacteroides fragilis (strain ATCC 25285 / DSM 2151 / CCUG 4856 / JCM 11019 / LMG 10263 / NCTC 9343 / Onslow / VPI 2553 / EN-2).